Reading from the N-terminus, the 265-residue chain is Hydroxyethylthiazole kinase (265 aa).

Substrate is bound at residue methionine 55. Residues arginine 130 and serine 176 each contribute to the ATP site. Residue glycine 203 coordinates substrate.

This sequence belongs to the Thz kinase family. The cofactor is Mg(2+).

It carries out the reaction 5-(2-hydroxyethyl)-4-methylthiazole + ATP = 4-methyl-5-(2-phosphooxyethyl)-thiazole + ADP + H(+). It functions in the pathway cofactor biosynthesis; thiamine diphosphate biosynthesis; 4-methyl-5-(2-phosphoethyl)-thiazole from 5-(2-hydroxyethyl)-4-methylthiazole: step 1/1. Functionally, catalyzes the phosphorylation of the hydroxyl group of 4-methyl-5-beta-hydroxyethylthiazole (THZ). The sequence is that of Hydroxyethylthiazole kinase from Leptospira interrogans serogroup Icterohaemorrhagiae serovar Lai (strain 56601).